A 196-amino-acid chain; its full sequence is Small ribosomal subunit protein uS4c (196 aa).

The region spanning 89–169 (MRLDNIIFRL…LPKHLTIDTV (81 aa)) is the S4 RNA-binding domain.

This sequence belongs to the universal ribosomal protein uS4 family. As to quaternary structure, part of the 30S ribosomal subunit. Contacts protein S5. The interaction surface between S4 and S5 is involved in control of translational fidelity.

It is found in the plastid. The protein resides in the chloroplast. In terms of biological role, one of the primary rRNA binding proteins, it binds directly to 16S rRNA where it nucleates assembly of the body of the 30S subunit. Functionally, with S5 and S12 plays an important role in translational accuracy. The chain is Small ribosomal subunit protein uS4c (rps4) from Stipellula capensis (Cape rice grass).